The following is a 107-amino-acid chain: Large ribosomal subunit protein uL24 (107 aa).

This sequence belongs to the universal ribosomal protein uL24 family. In terms of assembly, part of the 50S ribosomal subunit.

Functionally, one of two assembly initiator proteins, it binds directly to the 5'-end of the 23S rRNA, where it nucleates assembly of the 50S subunit. Its function is as follows. One of the proteins that surrounds the polypeptide exit tunnel on the outside of the subunit. The protein is Large ribosomal subunit protein uL24 of Neisseria meningitidis serogroup C (strain 053442).